The primary structure comprises 44 residues: U2-agatoxin-Ao1s (44 aa).

A propeptide spanning residues 1–9 (KKVYSFLKL) is cleaved from the precursor. 3 disulfide bridges follow: Cys-12–Cys-28, Cys-19–Cys-33, and Cys-27–Cys-43.

The protein belongs to the neurotoxin 01 (U2-agtx) family. Expressed by the venom gland.

Its subcellular location is the secreted. Its function is as follows. Insect active toxin causing rapid but reversible paralysis in crickets. No activity shown in mammals. Does not show effect on mammalian voltage-gated calcium channels. The chain is U2-agatoxin-Ao1s from Agelena orientalis (Funnel-web spider).